A 191-amino-acid chain; its full sequence is GTP cyclohydrolase 1 (191 aa).

Cys80, His83, and Cys151 together coordinate Zn(2+).

It belongs to the GTP cyclohydrolase I family. In terms of assembly, toroid-shaped homodecamer, composed of two pentamers of five dimers.

It catalyses the reaction GTP + H2O = 7,8-dihydroneopterin 3'-triphosphate + formate + H(+). Its pathway is cofactor biosynthesis; 7,8-dihydroneopterin triphosphate biosynthesis; 7,8-dihydroneopterin triphosphate from GTP: step 1/1. The chain is GTP cyclohydrolase 1 from Leifsonia xyli subsp. xyli (strain CTCB07).